Reading from the N-terminus, the 397-residue chain is DnaJ homolog subfamily A member 1 (397 aa).

Residues 6-68 (TYYDVLGVKP…KKRELYDKGG (63 aa)) enclose the J domain. K66 is subject to N6-acetyllysine. Position 83 is a phosphoserine (S83). The CR-type zinc-finger motif lies at 121-205 (GATRKLALQK…CNGRKIVREK (85 aa)). Zn(2+)-binding residues include C134, C137, C150, C153, C177, C180, C193, and C196. CXXCXGXG motif repeat units lie at residues 134-141 (CDKCEGRG), 150-157 (CPNCRGTG), 177-184 (CMECQGHG), and 193-200 (CKSCNGRK). S335 is subject to Phosphoserine. A disordered region spans residues 352–397 (VEETDEMDQVELVDFDPNQERRRHYNGEAYEDDEHHPRGGVQCQTS). Over residues 353-365 (EETDEMDQVELVD) the composition is skewed to acidic residues. Y381 bears the Phosphotyrosine mark. A Cysteine methyl ester modification is found at C394. C394 carries the S-farnesyl cysteine lipid modification. The propeptide at 395–397 (QTS) is removed in mature form.

In terms of assembly, identified in a complex with HSPA1B and BAX. Interacts with RNF207.

Its subcellular location is the membrane. The protein localises to the cytoplasm. It is found in the microsome. The protein resides in the mitochondrion. It localises to the nucleus. Its subcellular location is the perinuclear region. In terms of biological role, co-chaperone for HSPA8/Hsc70. Plays a role in protein transport into mitochondria via its role as co-chaperone. Functions as co-chaperone for HSPA1B and negatively regulates the translocation of BAX from the cytosol to mitochondria in response to cellular stress, thereby protecting cells against apoptosis. Stimulates ATP hydrolysis, but not the folding of unfolded proteins mediated by HSPA1A (in vitro). Promotes apoptosis in response to cellular stress mediated by exposure to anisomycin or UV. This chain is DnaJ homolog subfamily A member 1 (DNAJA1), found in Chlorocebus aethiops (Green monkey).